The following is a 510-amino-acid chain: Probable sphingolipid transporter spinster homolog 3 (510 aa).

Residues 44–64 (SSLSPVWLLVIFCIINLLNYM) form a helical membrane-spanning segment. 2 N-linked (GlcNAc...) asparagine glycosylation sites follow: asparagine 75 and asparagine 98. 11 helical membrane passes run 106-126 (VLSSSFMVGLLIASPIFASLA), 136-156 (VWTIAVLGCGSSFAFWFIVLC), 158-178 (MFVGVGEASFISLAAPFIDDN), 185-205 (AAWLGLFYMCIPSGVALGYVY), 219-239 (FWGEAVLMAPFAVLGFLMKPL), 298-318 (VFVVNVLGYVSYNFVIGAYSY), 336-356 (IFGAVTIICGIVGTLSGGFIL), 369-387 (LLSGATFLGAVFCFTAFTL), 392-414 (GFIALFALGELLVFATQAPVNYV), 430-450 (ISTVAIHIFGDVPSSPLVGIV), and 462-482 (LILTSILFLAAAIWFIGKINL).

Belongs to the major facilitator superfamily. Spinster (TC 2.A.1.49) family.

It is found in the mitochondrion inner membrane. Its function is as follows. Probable sphingolipid transporter. The protein is Probable sphingolipid transporter spinster homolog 3 of Arabidopsis thaliana (Mouse-ear cress).